The chain runs to 653 residues: Putative clathrin assembly protein At2g25430 (653 aa).

In terms of domain architecture, ENTH spans 23–159 (VASNMAPDLE…ELALFERKSG (137 aa)). Residues 160-171 (VSVNSGGNSSHH) show a composition bias toward low complexity. The disordered stretch occupies residues 160 to 240 (VSVNSGGNSS…GGGGGGRDEK (81 aa)). A compositionally biased stretch (basic and acidic residues) spans 172–186 (SNNDDRYGRGRDDFR). Over residues 197 to 214 (NGGGGGSDFRGDNNGYGG) the composition is skewed to gly residues. At Ser-221 the chain carries Phosphoserine. Residue Thr-244 is modified to Phosphothreonine. The span at 376–389 (RAKRGKSPERKEIE) shows a compositional bias: basic and acidic residues. The segment at 376–431 (RAKRGKSPERKEIEAPPPVVEEEEPEPDMNEIKALPPPENYTPPPPPEPEPQPEKP) is disordered. A compositionally biased stretch (acidic residues) spans 395–404 (VEEEEPEPDM). Residues 410-425 (LPPPENYTPPPPPEPE) show a composition bias toward pro residues.

It is found in the membrane. The protein localises to the clathrin-coated pit. Its subcellular location is the golgi apparatus. It localises to the cytoplasmic vesicle. The protein resides in the clathrin-coated vesicle. In Arabidopsis thaliana (Mouse-ear cress), this protein is Putative clathrin assembly protein At2g25430.